A 225-amino-acid polypeptide reads, in one-letter code: tRNA (guanine-N(1)-)-methyltransferase (225 aa).

S-adenosyl-L-methionine is bound by residues Gly112 and 132 to 137; that span reads IGDYVL.

This sequence belongs to the RNA methyltransferase TrmD family. In terms of assembly, homodimer.

The protein resides in the cytoplasm. It carries out the reaction guanosine(37) in tRNA + S-adenosyl-L-methionine = N(1)-methylguanosine(37) in tRNA + S-adenosyl-L-homocysteine + H(+). Specifically methylates guanosine-37 in various tRNAs. This is tRNA (guanine-N(1)-)-methyltransferase from Bacteroides thetaiotaomicron (strain ATCC 29148 / DSM 2079 / JCM 5827 / CCUG 10774 / NCTC 10582 / VPI-5482 / E50).